Consider the following 388-residue polypeptide: Processive diacylglycerol beta-glucosyltransferase (388 aa).

Belongs to the glycosyltransferase 28 family. UgtP subfamily.

It is found in the cell membrane. It catalyses the reaction a 1,2-diacyl-3-O-(beta-D-glucopyranosyl)-sn-glycerol + UDP-alpha-D-glucose = a 1,2-diacyl-3-O-(beta-D-Glc-(1-&gt;6)-beta-D-Glc)-sn-glycerol + UDP + H(+). The catalysed reaction is a 1,2-diacyl-3-O-(beta-D-Glc-(1-&gt;6)-beta-D-Glc)-sn-glycerol + UDP-alpha-D-glucose = a 1,2-diacyl-3-O-(beta-D-Glc-(1-&gt;6)-beta-D-Glc-(1-&gt;6)-beta-D-Glc)-sn-glycerol + UDP + H(+). The enzyme catalyses a 1,2-diacyl-sn-glycerol + UDP-alpha-D-glucose = a 1,2-diacyl-3-O-(beta-D-glucopyranosyl)-sn-glycerol + UDP + H(+). It functions in the pathway glycolipid metabolism; diglucosyl-diacylglycerol biosynthesis. Functionally, processive glucosyltransferase involved in the biosynthesis of both the bilayer- and non-bilayer-forming membrane glucolipids. Is able to successively transfer up to three glucosyl residues to diacylglycerol (DAG), thereby catalyzing the formation of beta-monoglucosyl-DAG (3-O-(beta-D-glucopyranosyl)-1,2-diacyl-sn-glycerol), beta-diglucosyl-DAG (3-O-(beta-D-glucopyranosyl-beta-(1-&gt;6)-D-glucopyranosyl)-1,2-diacyl-sn-glycerol) and beta-triglucosyl-DAG (3-O-(beta-D-glucopyranosyl-beta-(1-&gt;6)-D-glucopyranosyl-beta-(1-&gt;6)-D-glucopyranosyl)-1,2-diacyl-sn-glycerol). Beta-diglucosyl-DAG is the predominant glycolipid found in Bacillales and is also used as a membrane anchor for lipoteichoic acid (LTA). This chain is Processive diacylglycerol beta-glucosyltransferase, found in Bacillus cereus (strain B4264).